Consider the following 968-residue polypeptide: Angiomotin-like protein 1 (968 aa).

2 stretches are compositionally biased toward polar residues: residues 152–164 (VYQS…QGQE) and 177–187 (RSTQPQQNNEE). The segment at 152-258 (VYQSARQEPQ…NRANSGQAHK (107 aa)) is disordered. The span at 203–224 (GQQQQQQQQQQQQQQQQQQGQG) shows a compositional bias: low complexity. A phosphoserine mark is found at Ser-253, Ser-281, and Ser-307. Positions 271 to 291 (RSLSERIMQLSLERNGAKQHL) form a coiled coil. The tract at residues 285–343 (NGAKQHLPSSGNGKSFKAGGEPSPAQPVCKALDPRGPPPEYPFKTKPMKSPVSKNQDHG) is disordered. Coiled-coil stretches lie at residues 449-645 (VERA…RRLR) and 676-705 (ALME…YLEE). Residues 721–742 (AERDTTISNHSRNGSYGESSLE) form a disordered region. Polar residues predominate over residues 726–738 (TISNHSRNGSYGE). The residue at position 731 (Ser-731) is a Phosphoserine. A coiled-coil region spans residues 748 to 773 (EEEEVVQANRRCQDMEYTIKNLHAKI). The interval 785-834 (QRSRKDAGKTDSASLRPARSVPSIAAATGTHSRQTSLTSSQLTEEKKEEK) is disordered. Phosphoserine occurs at positions 804, 816, and 840. The span at 853–878 (ASAPLLPTTPASALSLPASTTSASST) shows a compositional bias: low complexity. Residues 853-956 (ASAPLLPTTP…GRVSNLLHKP (104 aa)) form a disordered region. Phosphoserine is present on residues Ser-912 and Ser-918. The short motif at 965–968 (EVLI) is the PDZ-binding element.

It belongs to the angiomotin family. In terms of processing, polyubiquitinated by NEDD4, leading to proteasomal degradation. In terms of tissue distribution, expressed in exocrine glands, including pancreas, submandibular gland, lacrimal gland, parotid gland and sublingual gland (at protein level).

Its subcellular location is the cell junction. It is found in the tight junction. In terms of biological role, inhibits the Wnt/beta-catenin signaling pathway, probably by recruiting CTNNB1 to recycling endosomes and hence preventing its translocation to the nucleus. This Mus musculus (Mouse) protein is Angiomotin-like protein 1 (Amotl1).